We begin with the raw amino-acid sequence, 377 residues long: UPF0425 pyridoxal phosphate-dependent protein MTH_1914 (377 aa).

N6-(pyridoxal phosphate)lysine is present on K207.

Belongs to the UPF0425 family. Pyridoxal 5'-phosphate serves as cofactor.

The chain is UPF0425 pyridoxal phosphate-dependent protein MTH_1914 from Methanothermobacter thermautotrophicus (strain ATCC 29096 / DSM 1053 / JCM 10044 / NBRC 100330 / Delta H) (Methanobacterium thermoautotrophicum).